A 450-amino-acid chain; its full sequence is Phosphoglucosamine mutase (450 aa).

Serine 97 serves as the catalytic Phosphoserine intermediate. Residues serine 97, aspartate 236, aspartate 238, and aspartate 240 each coordinate Mg(2+). Serine 97 is subject to Phosphoserine.

The protein belongs to the phosphohexose mutase family. It depends on Mg(2+) as a cofactor. Post-translationally, activated by phosphorylation.

It catalyses the reaction alpha-D-glucosamine 1-phosphate = D-glucosamine 6-phosphate. Functionally, catalyzes the conversion of glucosamine-6-phosphate to glucosamine-1-phosphate. This Prochlorococcus marinus (strain MIT 9312) protein is Phosphoglucosamine mutase.